A 612-amino-acid chain; its full sequence is Apoptosis-inducing factor 1, mitochondrial (612 aa).

Short sequence motifs (mitochondrial localization signal) lie at residues 1–30 (MFRC…PKQR) and 62–88 (KMDN…KTIK). Residues 1–54 (MFRCGGLAGAFKQKLVPLVRTVYVQRPKQRNRLPGNLFQQWRVPLELQMARQMA) constitute a mitochondrion transit peptide. A propeptide spans 55–101 (SSGSSGGKMDNSVLVLIVGLSTIGAGAYAYKTIKEDQKRYNERVMGL) (removed in mature form). An N6-succinyllysine modification is found at lysine 108. Residue serine 115 is modified to Phosphoserine. The segment at 133-482 (FLLIGGGTAA…KPYWHQSMFW (350 aa)) is FAD-dependent oxidoreductase. Residues 137–141 (GGGTA), 163–164 (ED), arginine 171, and lysine 176 each bind FAD. An NAD(+)-binding site is contributed by tryptophan 195. Valine 232 provides a ligand contact to FAD. Lysine 254 participates in a covalent cross-link: Glycyl lysine isopeptide (Lys-Gly) (interchain with G-Cter in ubiquitin). Serine 267 carries the phosphoserine modification. Arginine 284 provides a ligand contact to FAD. Residues 307 to 310 (GGFL), glutamate 335, and lysine 341 contribute to the NAD(+) site. Serine 370 bears the Phosphoserine mark. The residue at position 387 (lysine 387) is an N6-acetyllysine. Residue glycine 398 participates in NAD(+) binding. Aspartate 437 contacts FAD. The short motif at 445-450 (KLGRRR) is the Nuclear localization signal element. NAD(+)-binding positions include 452-453 (EH), tryptophan 482, and glutamate 492. FAD-binding positions include 453-454 (HH) and tryptophan 482. A compositionally biased stretch (polar residues) spans 512–528 (AQDNPKSATEQSGTGIR). The interval 512-551 (AQDNPKSATEQSGTGIRSESETESEASEITIPPSAPAVPQ) is disordered. Threonine 520 carries the post-translational modification Phosphothreonine. Serine 523 and serine 529 each carry phosphoserine. Residue asparagine 582 coordinates NAD(+). Residue lysine 592 is modified to N6-acetyllysine.

Belongs to the FAD-dependent oxidoreductase family. Monomer (oxidized form). Homodimer (reduced form). Upon reduction with NADH, undergoes dimerization and forms tight, long-lived FADH2-NAD charge transfer complexes (CTC) resistant to oxidation. Also dimerizes with isoform 3 preventing its release from mitochondria. Interacts with XIAP/BIRC4. Interacts (via N-terminus) with EIF3G (via C-terminus). Interacts with PRELID1. Interacts with CHCHD4; the interaction increases in presence of NADH. Interacts with processed form of PARP1 (Poly [ADP-ribose] polymerase 1, processed C-terminus); interaction is mediated with poly-ADP-ribose chains attached to PARP1, promoting translocation into the nucleus. FAD serves as cofactor. Post-translationally, under normal conditions, a 54-residue N-terminal segment is first proteolytically removed during or just after translocation into the mitochondrial intermembrane space (IMS) by the mitochondrial processing peptidase (MPP) to form the inner-membrane-anchored mature form (AIFmit). During apoptosis, it is further proteolytically processed at amino-acid position 101 leading to the generation of the mature form, which is confined to the mitochondrial IMS in a soluble form (AIFsol). AIFsol is released to the cytoplasm in response to specific death signals, and translocated to the nucleus, where it induces nuclear apoptosis in a caspase-independent manner. In terms of processing, ubiquitination by XIAP/BIRC4 does not lead to proteasomal degradation. Ubiquitination at Lys-254 by XIAP/BIRC4 blocks its ability to bind DNA and induce chromatin degradation, thereby inhibiting its ability to induce cell death. As to expression, expressed in cortical neurons (at protein level). In terms of tissue distribution, expressed in liver (at protein level).

It localises to the mitochondrion intermembrane space. Its subcellular location is the mitochondrion inner membrane. It is found in the cytoplasm. The protein localises to the nucleus. The protein resides in the perinuclear region. It localises to the mitochondrion. Its subcellular location is the cytosol. The catalysed reaction is A + NADH + H(+) = AH2 + NAD(+). In terms of biological role, functions both as NADH oxidoreductase and as regulator of apoptosis. In response to apoptotic stimuli, it is released from the mitochondrion intermembrane space into the cytosol and to the nucleus, where it functions as a proapoptotic factor in a caspase-independent pathway. Release into the cytoplasm is mediated upon binding to poly-ADP-ribose chains. The soluble form (AIFsol) found in the nucleus induces 'parthanatos' i.e. caspase-independent fragmentation of chromosomal DNA. Binds to DNA in a sequence-independent manner. Interacts with EIF3G, and thereby inhibits the EIF3 machinery and protein synthesis, and activates caspase-7 to amplify apoptosis. Plays a critical role in caspase-independent, pyknotic cell death in hydrogen peroxide-exposed cells. In contrast, participates in normal mitochondrial metabolism. Plays an important role in the regulation of respiratory chain biogenesis by interacting with CHCHD4 and controlling CHCHD4 mitochondrial import. This Mus musculus (Mouse) protein is Apoptosis-inducing factor 1, mitochondrial.